The chain runs to 180 residues: Secreted RxLR effector protein 5 (180 aa).

The signal sequence occupies residues 1 to 24 (MRFYYTLLATAAALLVHSDALSAA). Residues 44 to 60 (RFLRRHTDSETTDNEER) carry the RxLR-dEER motif.

The protein belongs to the RxLR effector family.

Its subcellular location is the secreted. The protein resides in the host cell. In terms of biological role, secreted effector that partially suppresses elicitor-induced cell death in host and enhances virulence of P.parasitica. The polypeptide is Secreted RxLR effector protein 5 (Phytophthora nicotianae (Potato buckeye rot agent)).